Here is a 278-residue protein sequence, read N- to C-terminus: Putative cysteine-rich repeat secretory protein 17 (278 aa).

The first 32 residues, 1-32 (MYSLSSVSKHLILVHILALVATQLLLIRSVSS), serve as a signal peptide directing secretion. 2 consecutive Gnk2-homologous domains span residues 39–142 (YLNH…SIDN) and 148–265 (YGDS…LYPF).

This sequence belongs to the cysteine-rich repeat secretory protein family.

It is found in the secreted. The protein is Putative cysteine-rich repeat secretory protein 17 (CRRSP17) of Arabidopsis thaliana (Mouse-ear cress).